The following is a 271-amino-acid chain: Collectin-11 (271 aa).

The signal sequence occupies residues 1-25 (MVGEKLVAYMLVSVLGLALLRSVFG). Residues 44-103 (GEAGEKGEKGAPGRPGRVGPTGEQGPPGDKGQKGSPGRYGKMGPTGPKGLKGDMGDPGPK) enclose the Collagen-like domain. The disordered stretch occupies residues 46 to 112 (AGEKGEKGAP…KGPNGEPGVP (67 aa)). Positions 124–148 (EMDIQVVQLTNELKFIKNAVAGIKE) form a coiled coil. The C-type lectin domain occupies 149 to 265 (TDSKVYLLVK…CQLTMYFVCE (117 aa)). 2 disulfides stabilise this stretch: Cys-170-Cys-264 and Cys-242-Cys-256. Residue Arg-200 participates in a carbohydrate binding. Residues Asp-207, Glu-211, Glu-232, Asn-234, Asn-235, Asp-238, Glu-240, and Asp-241 each coordinate Ca(2+). An a carbohydrate-binding site is contributed by Glu-240. A carbohydrate-binding positions include Glu-244 and 252–254 (IDV). Asp-253 lines the Ca(2+) pocket.

The protein belongs to the COLEC10/COLEC11 family. As to quaternary structure, homotrimer; disulfide-linked. Interacts with MASP1; probably triggers the lectin pathway of complement.

The protein resides in the secreted. Lectin that plays a role in innate immunity, apoptosis and embryogenesis. Calcium-dependent lectin that binds self and non-self glycoproteins presenting high mannose oligosaccharides with at least one terminal alpha-1,2-linked mannose epitope. Primarily recognizes the terminal disaccharide of the glycan. Also recognizes a subset of fucosylated glycans and lipopolysaccharides. Plays a role in innate immunity through its ability to bind non-self sugars presented by microorganisms and to activate the complement through the recruitment of MAPS1. Also plays a role in apoptosis through its ability to bind in a calcium-independent manner the DNA present at the surface of apoptotic cells and to activate the complement in response to this binding. Finally, plays a role in development, probably serving as a guidance cue during the migration of neural crest cells and other cell types during embryogenesis. The chain is Collectin-11 (colec11) from Danio rerio (Zebrafish).